A 405-amino-acid chain; its full sequence is CCA-adding enzyme (405 aa).

Residues G8 and R11 each coordinate ATP. The CTP site is built by G8 and R11. Mg(2+) is bound by residues E21 and D23. ATP-binding residues include R91, R137, and R140. 3 residues coordinate CTP: R91, R137, and R140. In terms of domain architecture, HD spans 220–326 (PLSHGLSTLS…LNFFDELDLW (107 aa)).

It belongs to the tRNA nucleotidyltransferase/poly(A) polymerase family. Bacterial CCA-adding enzyme type 2 subfamily. It depends on Mg(2+) as a cofactor.

The enzyme catalyses a tRNA precursor + 2 CTP + ATP = a tRNA with a 3' CCA end + 3 diphosphate. It catalyses the reaction a tRNA with a 3' CCA end + 2 CTP + ATP = a tRNA with a 3' CCACCA end + 3 diphosphate. Functionally, catalyzes the addition and repair of the essential 3'-terminal CCA sequence in tRNAs without using a nucleic acid template. Adds these three nucleotides in the order of C, C, and A to the tRNA nucleotide-73, using CTP and ATP as substrates and producing inorganic pyrophosphate. tRNA 3'-terminal CCA addition is required both for tRNA processing and repair. Also involved in tRNA surveillance by mediating tandem CCA addition to generate a CCACCA at the 3' terminus of unstable tRNAs. While stable tRNAs receive only 3'-terminal CCA, unstable tRNAs are marked with CCACCA and rapidly degraded. This chain is CCA-adding enzyme, found in Hamiltonella defensa subsp. Acyrthosiphon pisum (strain 5AT).